A 122-amino-acid chain; its full sequence is Large ribosomal subunit protein uL18 (122 aa).

Belongs to the universal ribosomal protein uL18 family. In terms of assembly, part of the 50S ribosomal subunit; part of the 5S rRNA/L5/L18/L25 subcomplex. Contacts the 5S and 23S rRNAs.

Functionally, this is one of the proteins that bind and probably mediate the attachment of the 5S RNA into the large ribosomal subunit, where it forms part of the central protuberance. The protein is Large ribosomal subunit protein uL18 of Petrotoga mobilis (strain DSM 10674 / SJ95).